The chain runs to 116 residues: Large ribosomal subunit protein bL19 (116 aa).

It belongs to the bacterial ribosomal protein bL19 family.

Its function is as follows. This protein is located at the 30S-50S ribosomal subunit interface and may play a role in the structure and function of the aminoacyl-tRNA binding site. The protein is Large ribosomal subunit protein bL19 of Geobacillus sp. (strain WCH70).